A 695-amino-acid polypeptide reads, in one-letter code: Pentatricopeptide repeat-containing protein 1, mitochondrial (695 aa).

PPR repeat units lie at residues 133–169 (TQYW…RLQP), 170–204 (LECN…DLEP), 205–243 (SDAT…NFQL), 244–278 (NLKT…GHAV), 279–315 (TEET…GIKP), and 316–352 (SRHG…TILL). A disordered region spans residues 391–416 (QKLEGPPALPEARVTSRTQPEVETTA). PPR repeat units lie at residues 470–485 (EGFL…QPDI), 517–551 (DVTF…GIVP), 552–583 (NLRT…QVSP), and 584–618 (NIHI…SVPV). Positions 672–695 (WQEFQNKPVGDQDTTDKAGGLRDG) are disordered. A compositionally biased stretch (basic and acidic residues) spans 685 to 695 (TTDKAGGLRDG).

The protein belongs to the PTCD1 family. As to quaternary structure, associates with mitochondrial leucine tRNAs. Interacts with ELAC2.

It is found in the mitochondrion. The protein resides in the mitochondrion matrix. Functionally, mitochondrial protein implicated in negative regulation of leucine tRNA levels, as well as negative regulation of mitochondria-encoded proteins and COX activity. Also affects the 3'-processing of mitochondrial tRNAs. The chain is Pentatricopeptide repeat-containing protein 1, mitochondrial (Ptcd1) from Mus musculus (Mouse).